A 435-amino-acid polypeptide reads, in one-letter code: Homoserine dehydrogenase (435 aa).

NADPH-binding residues include Thr13, Val14, Arg43, and Lys105. Residue Val14 participates in NAD(+) binding. NADP(+) contacts are provided by Val14, Arg43, and Lys105. Positions 129, 132, 134, and 136 each coordinate Na(+). Catalysis depends on Lys204, which acts as the Proton donor. Disordered stretches follow at residues 255–274 (ARGV…TPDR) and 377–402 (RCDD…PDHV). Composition is skewed to basic and acidic residues over residues 262-274 (RAPD…TPDR) and 377-391 (RCDD…AERR).

Belongs to the homoserine dehydrogenase family. Requires a metal cation as cofactor.

The enzyme catalyses L-homoserine + NADP(+) = L-aspartate 4-semialdehyde + NADPH + H(+). It carries out the reaction L-homoserine + NAD(+) = L-aspartate 4-semialdehyde + NADH + H(+). The protein operates within amino-acid biosynthesis; L-methionine biosynthesis via de novo pathway; L-homoserine from L-aspartate: step 3/3. It participates in amino-acid biosynthesis; L-threonine biosynthesis; L-threonine from L-aspartate: step 3/5. Functionally, catalyzes the conversion of L-aspartate-beta-semialdehyde (L-Asa) to L-homoserine (L-Hse), the third step in the biosynthesis of threonine and methionine from aspartate. This is Homoserine dehydrogenase (hom) from Methylobacillus glycogenes.